The primary structure comprises 113 residues: uncharacterized protein (113 aa).

Residues 49 to 91 (FFVVVGKEEYVVEGGFCTCPDFLVNLKGKSPCAHIIAVEVAKI) form an SWIM-type zinc finger.

This is an uncharacterized protein from Archaeoglobus fulgidus (strain ATCC 49558 / DSM 4304 / JCM 9628 / NBRC 100126 / VC-16).